A 108-amino-acid chain; its full sequence is Probable 4-amino-4-deoxy-L-arabinose-phosphoundecaprenol flippase subunit ArnE (108 aa).

3 helical membrane-spanning segments follow: residues 32-52, 58-78, and 85-105; these read PLLL…LVWL, VPVG…TLAA, and TLSL…AIMG. The EamA domain maps to 34 to 106; sequence LLWLGGSVLL…IVAGVAIMGS (73 aa).

It belongs to the ArnE family. In terms of assembly, heterodimer of ArnE and ArnF.

It localises to the cell inner membrane. It participates in bacterial outer membrane biogenesis; lipopolysaccharide biosynthesis. Translocates 4-amino-4-deoxy-L-arabinose-phosphoundecaprenol (alpha-L-Ara4N-phosphoundecaprenol) from the cytoplasmic to the periplasmic side of the inner membrane. The sequence is that of Probable 4-amino-4-deoxy-L-arabinose-phosphoundecaprenol flippase subunit ArnE from Erwinia tasmaniensis (strain DSM 17950 / CFBP 7177 / CIP 109463 / NCPPB 4357 / Et1/99).